Consider the following 155-residue polypeptide: Glutamyl-tRNA(Gln) amidotransferase subunit C, chloroplastic/mitochondrial (155 aa).

Residues M1–Y52 constitute a chloroplast and mitochondrion transit peptide.

This sequence belongs to the GatC family. As to quaternary structure, subunit of the heterotrimeric GatCAB amidotransferase (AdT) complex, composed of A, B and C subunits.

The protein resides in the mitochondrion. The protein localises to the plastid. It is found in the chloroplast. It carries out the reaction L-glutamyl-tRNA(Gln) + L-glutamine + ATP + H2O = L-glutaminyl-tRNA(Gln) + L-glutamate + ADP + phosphate + H(+). Allows the formation of correctly charged Gln-tRNA(Gln) through the transamidation of misacylated Glu-tRNA(Gln) in chloroplasts and mitochondria. The reaction takes place in the presence of glutamine and ATP through an activated gamma-phospho-Glu-tRNA(Gln). This is Glutamyl-tRNA(Gln) amidotransferase subunit C, chloroplastic/mitochondrial from Arabidopsis thaliana (Mouse-ear cress).